Here is a 141-residue protein sequence, read N- to C-terminus: MNARGLGSQLKDSIPVTELSASGPFESHDLLRKGFSCVKNELLPSHPLELSEKNFQLNQDKMNFSTLRNIQGLFAPLKLQMEFKAVQQVQRLPFLPSSNLSLDILRGNDETIGFEDILNDPSQSELMGEPHLMVEYKLGLL.

Residue Lys-39 forms a Glycyl lysine isopeptide (Lys-Gly) (interchain with G-Cter in SUMO2) linkage.

This sequence belongs to the POMP/UMP1 family. As to quaternary structure, constituent of preproteasomes, but not of mature 20S proteasomes. Within the preproteasome, may directly interact with PSMB1/beta6, PSMB4/beta7, PSMB5/beta5, PSMB6/beta1 and PSMB9/beta1i. Interaction with PSMB8/beta5i is controversial. Forms tetramers.

Its subcellular location is the cytoplasm. It localises to the cytosol. It is found in the nucleus. The protein localises to the microsome membrane. In terms of biological role, molecular chaperone essential for the assembly of standard proteasomes and immunoproteasomes. Degraded after completion of proteasome maturation. Mediates the association of 20S preproteasome with the endoplasmic reticulum. This is Proteasome maturation protein (POMP) from Bos taurus (Bovine).